A 510-amino-acid polypeptide reads, in one-letter code: 2-isopropylmalate synthase (510 aa).

In terms of domain architecture, Pyruvate carboxyltransferase spans 5 to 267 (LIIFDTTLRD…DTRIDSVHIV (263 aa)). D14, H202, H204, and N238 together coordinate Mn(2+). The interval 392 to 510 (KLLSLTAHSE…SKLERAHPQV (119 aa)) is regulatory domain.

It belongs to the alpha-IPM synthase/homocitrate synthase family. LeuA type 1 subfamily. In terms of assembly, homodimer. It depends on Mn(2+) as a cofactor.

The protein resides in the cytoplasm. It carries out the reaction 3-methyl-2-oxobutanoate + acetyl-CoA + H2O = (2S)-2-isopropylmalate + CoA + H(+). It participates in amino-acid biosynthesis; L-leucine biosynthesis; L-leucine from 3-methyl-2-oxobutanoate: step 1/4. In terms of biological role, catalyzes the condensation of the acetyl group of acetyl-CoA with 3-methyl-2-oxobutanoate (2-ketoisovalerate) to form 3-carboxy-3-hydroxy-4-methylpentanoate (2-isopropylmalate). The protein is 2-isopropylmalate synthase of Nitrosospira multiformis (strain ATCC 25196 / NCIMB 11849 / C 71).